Here is a 240-residue protein sequence, read N- to C-terminus: Lysoplasmalogenase TMEM86A (240 aa).

Topologically, residues 1–21 (MVSPVTVVKSEGPKLVPFFKA) are cytoplasmic. A helical membrane pass occupies residues 22–42 (TCVYFVLWLPSSSPSWVSALI). K43 is a topological domain (extracellular). A helical membrane pass occupies residues 44 to 64 (CLPIFCLWLFLLAHGLGFLLT). Residues 65-70 (HPSATR) lie on the Cytoplasmic side of the membrane. Residues 71–91 (IFVGLVFSAIGDAFLIWQDQG) form a helical membrane-spanning segment. Residue Y92 is a topological domain, extracellular. Residues 93–113 (FVHGMLMFAVTHMLYASAFGM) traverse the membrane as a helical segment. Over 114 to 115 (RP) the chain is Cytoplasmic. A helical transmembrane segment spans residues 116 to 136 (LGLRTGLLMVILSGLCYAFLY). Over 137 to 138 (PN) the chain is Extracellular. A helical transmembrane segment spans residues 139-159 (LTGAFTYVVGVYVAIIGFMGW). Residues 160–174 (RAMAGLQLVGAAWRW) lie on the Cytoplasmic side of the membrane. Residues 175–195 (TELAAGTGALLFIVSDLTIAL) form a helical membrane-spanning segment. Residues 196-206 (DKFCFPVPYSR) lie on the Extracellular side of the membrane. The chain crosses the membrane as a helical span at residues 207–227 (ALIMSTYYAAQMLIALSAVES). At 228–240 (REPVEDYRLSKAK) the chain is on the cytoplasmic side.

This sequence belongs to the TMEM86 family.

The protein localises to the endoplasmic reticulum membrane. The enzyme catalyses a 1-O-(1Z-alkenyl)-sn-glycero-3-phosphocholine + H2O = a 2,3-saturated aldehyde + sn-glycerol 3-phosphocholine. It catalyses the reaction a 1-O-(1Z-alkenyl)-sn-glycero-3-phosphoethanolamine + H2O = a 2,3-saturated aldehyde + sn-glycero-3-phosphoethanolamine. Functionally, catalyzes the hydrolysis of the vinyl ether bond of choline or ethanolamine lysoplasmalogens, forming fatty aldehyde and glycerophosphocholine or glycerophosphoethanolamine, respectively and is specific for the sn-2-deacylated (lyso) form of plasmalogen. Plays an important role in lysoplasmalogen metabolism in the adipocyte tissue and macrophages. The protein is Lysoplasmalogenase TMEM86A (TMEM86A) of Bos taurus (Bovine).